Reading from the N-terminus, the 1905-residue chain is Low-density lipoprotein receptor-related protein 4 (1905 aa).

The N-terminal stretch at 1–20 is a signal peptide; sequence MRRQWGALLLGALLCAHGLA. The Extracellular segment spans residues 21-1725; the sequence is SSPECACGRS…AAPGEGLHIS (1705 aa). 8 consecutive LDL-receptor class A domains span residues 26-67, 70-106, 109-144, 147-183, 190-226, 230-266, 269-305, and 311-350; these read ACGR…DGCI, TCSP…QDCP, ECEE…EQCD, KCSD…ENCP, PCNL…SDCS, PCRS…RNCT, MCTA…ENCE, and QCAL…QNCR. 30 disulfides stabilise this stretch: Cys-27–Cys-44, Cys-34–Cys-57, Cys-51–Cys-66, Cys-71–Cys-83, Cys-78–Cys-96, Cys-90–Cys-105, Cys-110–Cys-122, Cys-117–Cys-135, Cys-129–Cys-143, Cys-148–Cys-160, Cys-155–Cys-173, Cys-167–Cys-182, Cys-191–Cys-203, Cys-198–Cys-216, Cys-210–Cys-225, Cys-231–Cys-243, Cys-238–Cys-256, Cys-250–Cys-265, Cys-270–Cys-282, Cys-277–Cys-295, Cys-289–Cys-304, Cys-312–Cys-324, Cys-319–Cys-337, Cys-331–Cys-349, Cys-358–Cys-369, Cys-365–Cys-378, Cys-380–Cys-393, Cys-399–Cys-409, Cys-405–Cys-418, and Cys-420–Cys-433. Asn-264 is a glycosylation site (N-linked (GlcNAc...) asparagine). Residues 354 to 394 form the EGF-like 1; calcium-binding domain; sequence GEENCNVNNGGCAQKCQMVRGAVQCTCHTGYRLTEDGHTCQ. The EGF-like 2; calcium-binding domain maps to 395–434; the sequence is DVNECAEEGYCSQGCTNSEGAFQCWCETGYELRPDRRSCK. LDL-receptor class B repeat units follow at residues 480-522, 523-565, 566-609, 610-652, and 653-693; these read ELVF…DWVH, DKLY…HPME, GTIY…DYAG, RRMY…FEDS, and LYWT…LHPQ. Asn-498 carries N-linked (GlcNAc...) asparagine glycosylation. The 40-residue stretch at 698–737 folds into the EGF-like 3 domain; it reads GKNRCGDNNGGCTHLCLPSGQNYTCACPTGFRKISSHACA. Cystine bridges form between Cys-702–Cys-713, Cys-709–Cys-722, and Cys-724–Cys-736. Asn-719 carries an N-linked (GlcNAc...) asparagine glycan. LDL-receptor class B repeat units lie at residues 785-827, 828-870, 871-914, 915-956, and 957-998; these read DHVY…DWVT, NKLY…EPMG, GYMY…DYGS, QRLY…LYGE, and RIYW…FHRR. Asn-901 carries N-linked (GlcNAc...) asparagine glycosylation. N-linked (GlcNAc...) asparagine glycosylation occurs at Asn-1077. 10 LDL-receptor class B repeats span residues 1093–1135, 1136–1178, 1179–1222, 1223–1263, 1264–1306, 1397–1439, 1440–1482, 1483–1526, 1527–1568, and 1569–1610; these read GKVY…DAIG, RKVY…YHEM, GFMY…DKAS, SQLL…LLDS, YIYW…DRAQ, GKVY…DWVA, RNLY…FPRK, GYLF…DYDT, RRIY…QDRW, and IYWT…SPQR. Asn-1415 and Asn-1467 each carry an N-linked (GlcNAc...) asparagine glycan. The interval 1659–1686 is disordered; that stretch reads PRATGMSEKSPVLPNTPPTTLYSSTTRT. Residues 1676–1686 are compositionally biased toward low complexity; that stretch reads PTTLYSSTTRT. The helical transmembrane segment at 1726–1746 threads the bilayer; sequence YAIGGLLSILLILVVIAALML. The Cytoplasmic segment spans residues 1747–1905; sequence YRHKKSKFTD…ERKLSSESQV (159 aa). The short motif at 1766–1769 is the Endocytosis signal element; it reads NPSY. Residues 1852–1905 form a disordered region; that stretch reads ASSGSLDDTETEQLLQEEQSECSSVHTAATPERRGSLPDTGWKHERKLSSESQV. Over residues 1882 to 1905 the composition is skewed to basic and acidic residues; sequence PERRGSLPDTGWKHERKLSSESQV.

The protein belongs to the LDLR family. Homooligomer. Interacts with MUSK; the heterodimer forms an AGRIN receptor complex that binds AGRIN resulting in activation of MUSK. Interacts (via the extracellular domain) with SOST; the interaction facilitates the inhibition of Wnt signaling. Interacts with MESD; the interaction promotes glycosylation of LRP4 and its cell-surface expression. As to expression, expressed in bone; present in osteoblasts and osteocytes. No expression is observed in osteoclast. Expressed in several regions of the brain.

Its subcellular location is the cell membrane. Its function is as follows. Mediates SOST-dependent inhibition of bone formation. Functions as a specific facilitator of SOST-mediated inhibition of Wnt signaling. Plays a key role in the formation and the maintenance of the neuromuscular junction (NMJ), the synapse between motor neuron and skeletal muscle. Directly binds AGRIN and recruits it to the MUSK signaling complex. Mediates the AGRIN-induced phosphorylation of MUSK, the kinase of the complex. The activation of MUSK in myotubes induces the formation of NMJ by regulating different processes including the transcription of specific genes and the clustering of AChR in the postsynaptic membrane. Alternatively, may be involved in the negative regulation of the canonical Wnt signaling pathway, being able to antagonize the LRP6-mediated activation of this pathway. More generally, has been proposed to function as a cell surface endocytic receptor binding and internalizing extracellular ligands for degradation by lysosomes. May play an essential role in the process of digit differentiation. The protein is Low-density lipoprotein receptor-related protein 4 (LRP4) of Homo sapiens (Human).